The following is a 315-amino-acid chain: Ribosomal RNA small subunit methyltransferase H (315 aa).

Residues 1–21 (MNVVNVVPMHLPPPPPRPRGE) form a disordered region. S-adenosyl-L-methionine-binding positions include 51 to 53 (GGH), Asp69, Phe96, Asp117, and Gln124. Residues 281–315 (KKPVTAGDDEVEGNPRARSAKLRAARRVGGAEALA) form a disordered region.

Belongs to the methyltransferase superfamily. RsmH family.

Its subcellular location is the cytoplasm. It carries out the reaction cytidine(1402) in 16S rRNA + S-adenosyl-L-methionine = N(4)-methylcytidine(1402) in 16S rRNA + S-adenosyl-L-homocysteine + H(+). Specifically methylates the N4 position of cytidine in position 1402 (C1402) of 16S rRNA. This chain is Ribosomal RNA small subunit methyltransferase H, found in Sorangium cellulosum (strain So ce56) (Polyangium cellulosum (strain So ce56)).